The primary structure comprises 189 residues: Threonylcarbamoyl-AMP synthase (189 aa).

Residues 3-189 enclose the YrdC-like domain; it reads TTSVTEAAEC…NALTGEVIRP (187 aa).

The protein belongs to the SUA5 family. TsaC subfamily.

It is found in the cytoplasm. The catalysed reaction is L-threonine + hydrogencarbonate + ATP = L-threonylcarbamoyladenylate + diphosphate + H2O. Required for the formation of a threonylcarbamoyl group on adenosine at position 37 (t(6)A37) in tRNAs that read codons beginning with adenine. Catalyzes the conversion of L-threonine, HCO(3)(-)/CO(2) and ATP to give threonylcarbamoyl-AMP (TC-AMP) as the acyladenylate intermediate, with the release of diphosphate. This is Threonylcarbamoyl-AMP synthase from Acinetobacter baumannii (strain ACICU).